A 430-amino-acid polypeptide reads, in one-letter code: UDP-N-acetylglucosamine 1-carboxyvinyltransferase (430 aa).

22–23 (KN) lines the phosphoenolpyruvate pocket. Residue Arg-102 participates in UDP-N-acetyl-alpha-D-glucosamine binding. Catalysis depends on Cys-126, which acts as the Proton donor. Cys-126 is subject to 2-(S-cysteinyl)pyruvic acid O-phosphothioketal. UDP-N-acetyl-alpha-D-glucosamine contacts are provided by residues 131 to 135 (RPVDL), 172 to 175 (KVSV), Asp-317, and Ile-339.

The protein belongs to the EPSP synthase family. MurA subfamily.

The protein resides in the cytoplasm. The catalysed reaction is phosphoenolpyruvate + UDP-N-acetyl-alpha-D-glucosamine = UDP-N-acetyl-3-O-(1-carboxyvinyl)-alpha-D-glucosamine + phosphate. The protein operates within cell wall biogenesis; peptidoglycan biosynthesis. In terms of biological role, cell wall formation. Adds enolpyruvyl to UDP-N-acetylglucosamine. The polypeptide is UDP-N-acetylglucosamine 1-carboxyvinyltransferase (Allorhizobium ampelinum (strain ATCC BAA-846 / DSM 112012 / S4) (Agrobacterium vitis (strain S4))).